The primary structure comprises 539 residues: Berberine bridge enzyme-like 21 (539 aa).

An N-terminal signal peptide occupies residues 1–26 (MIATQTFVSVFFFVFFLVSLPFFSSA). A disulfide bond links cysteine 41 and cysteine 104. Residue asparagine 79 is glycosylated (N-linked (GlcNAc...) asparagine). The FAD-binding PCMH-type domain maps to 82 to 256 (STPKPAIIVT…LGYKVKLVPV (175 aa)). Residues 119 to 181 (HDYEGLSYIS…KVHGFPAGVC (63 aa)) constitute a cross-link (6-(S-cysteinyl)-8alpha-(pros-histidyl)-FAD (His-Cys)). The N-linked (GlcNAc...) asparagine glycan is linked to asparagine 340.

This sequence belongs to the oxygen-dependent FAD-linked oxidoreductase family. The cofactor is FAD. The FAD cofactor is bound via a bicovalent 6-S-cysteinyl, 8alpha-N1-histidyl FAD linkage.

The protein localises to the secreted. Its subcellular location is the cell wall. The chain is Berberine bridge enzyme-like 21 from Arabidopsis thaliana (Mouse-ear cress).